An 84-amino-acid chain; its full sequence is MMFRLTSVSCFLLVIACLNLFQVVLTSRCFPPGIYCTPYLPCCWGICCGTCRNDNSSLTFLQFCLPFFFFLRPSHPLFLLLPAR.

A signal peptide spans 1–26; the sequence is MMFRLTSVSCFLLVIACLNLFQVVLT. 4 cysteine pairs are disulfide-bonded: cysteine 29–cysteine 43, cysteine 36–cysteine 48, cysteine 42–cysteine 51, and cysteine 47–cysteine 64. A propeptide spanning residues 71-84 is cleaved from the precursor; the sequence is LRPSHPLFLLLPAR.

The protein belongs to the conotoxin I2 superfamily. Expressed by the venom duct.

It is found in the secreted. In terms of biological role, inhibits the vertebrate voltage-gated potassium channels Kv1.1/KCNA1 and Kv1.3/KCNA3. The chain is Kappa-conotoxin-like Im11.3 from Conus imperialis (Imperial cone).